The primary structure comprises 732 residues: Ribosomal RNA large subunit methyltransferase K/L (732 aa).

A THUMP domain is found at 50–162 (MAYRICLWSR…RGRLLLGLDL (113 aa)). The interval 396 to 424 (TERETSSEGDEPQGASGATSRPGPRNDGA) is disordered.

Belongs to the methyltransferase superfamily. RlmKL family.

It is found in the cytoplasm. The catalysed reaction is guanosine(2445) in 23S rRNA + S-adenosyl-L-methionine = N(2)-methylguanosine(2445) in 23S rRNA + S-adenosyl-L-homocysteine + H(+). It carries out the reaction guanosine(2069) in 23S rRNA + S-adenosyl-L-methionine = N(2)-methylguanosine(2069) in 23S rRNA + S-adenosyl-L-homocysteine + H(+). Functionally, specifically methylates the guanine in position 2445 (m2G2445) and the guanine in position 2069 (m7G2069) of 23S rRNA. The chain is Ribosomal RNA large subunit methyltransferase K/L from Chromohalobacter salexigens (strain ATCC BAA-138 / DSM 3043 / CIP 106854 / NCIMB 13768 / 1H11).